A 472-amino-acid chain; its full sequence is Peptidoglycan endopeptidase RipA (472 aa).

The tat-type signal signal peptide spans 1-39 (MRRNRRGSPARPAARFVRPAIPSALSVALLVCTPGLATA). A NlpC/P60 domain is found at 340–472 (RQASEYVIRR…TPYVVRYIEY (133 aa)). Cys383 acts as the Nucleophile in catalysis. The Proton acceptor role is filled by His432. Glu444 is an active-site residue.

Belongs to the peptidase C40 family. As to quaternary structure, monomer. Interacts with RpfB and PBP1A (ponA1) via residues 448-472 of RipA, interacts with RpfE. Interacts with the chaperone MoxR1. RipA-MoxR1 interaction in the cytoplasm leads to proper folding of RipA, resulting in its secretion. Also interacts with Mce2B. Exported by the Tat system. The position of the signal peptide cleavage has not been experimentally proven.

The protein localises to the secreted. With respect to regulation, moxR1-mediated folding is critical for secretion via the TAT system. The synergistic effects on peptidoglycan degradation of RipA plus RpfB are inhibited by addition of PBP1A (ponA1). Its function is as follows. Peptidoglycan endopeptidase that cleaves the bond between D-glutamate and meso-diaminopimelate. Binds and degrades high-molecular weight peptidoglycan from a number of Actinobacteria; activity is increased in the presence of RpfB and inhibited by PBP1A (ponA1). Required for normal separation of daughter cells after cell division and for cell wall integrity. Required for host cell invasion and intracellular survival in host macrophages. This chain is Peptidoglycan endopeptidase RipA (ripA), found in Mycobacterium tuberculosis (strain ATCC 25618 / H37Rv).